The primary structure comprises 240 residues: Sugar fermentation stimulation protein homolog (240 aa).

Belongs to the SfsA family.

The protein is Sugar fermentation stimulation protein homolog of Pasteurella multocida (strain Pm70).